The following is a 564-amino-acid chain: Sphingomyelin phosphodiesterase 1 (564 aa).

A signal peptide spans 1–17 (MRIIYLISTVLLIYTNA). The Saposin B-type domain occupies 37–121 (FQPLCISCTG…IILPDCADPT (85 aa)). 3 disulfide bridges follow: Cys-41–Cys-117, Cys-44–Cys-110, and Cys-72–Cys-83. N-linked (GlcNAc...) asparagine glycosylation is present at Asn-151. Positions 165 and 167 each coordinate Zn(2+). 2 cysteine pairs are disulfide-bonded: Cys-180–Cys-185 and Cys-186–Cys-206. N-linked (GlcNAc...) asparagine glycosylation is present at Asn-221. The Zn(2+) site is built by Asp-234 and Asn-274. A disulfide bridge links Cys-341 with Cys-389. N-linked (GlcNAc...) asparagine glycosylation occurs at Asn-351. Zn(2+) is bound by residues His-381, His-415, and His-417. Asn-430 carries N-linked (GlcNAc...) asparagine glycosylation. 2 disulfide bridges follow: Cys-538-Cys-542 and Cys-548-Cys-561. Asn-556 carries N-linked (GlcNAc...) asparagine glycosylation.

The protein belongs to the acid sphingomyelinase family. The cofactor is Zn(2+).

The protein localises to the secreted. The catalysed reaction is a sphingomyelin + H2O = phosphocholine + an N-acylsphing-4-enine + H(+). The enzyme catalyses an N-acyl-15-methylhexadecasphing-4-enine-1-phosphocholine + H2O = an N-acyl-15-methylhexadecasphing-4-enine + phosphocholine + H(+). It functions in the pathway lipid metabolism; sphingolipid metabolism. In terms of biological role, sphingomyelin phosphodiesterase (sphingomyelinase) that converts sphingomyelin to ceramide (N-acyl-sphingoid base) and phosphocholine at acidic pH. Displays its enzymatic activity when secreted. May play distinct roles in signaling. The sequence is that of Sphingomyelin phosphodiesterase 1 (asm-1) from Caenorhabditis elegans.